The sequence spans 207 residues: Octanoyltransferase (207 aa).

The 177-residue stretch at 27–203 folds into the BPL/LPL catalytic domain; the sequence is ADTEDELWVV…HLETQFTPKA (177 aa). Residues 66 to 73, 133 to 135, and 146 to 148 each bind substrate; these read RGGQITYH, SLG, and GLA. C164 serves as the catalytic Acyl-thioester intermediate.

The protein belongs to the LipB family.

It localises to the cytoplasm. The enzyme catalyses octanoyl-[ACP] + L-lysyl-[protein] = N(6)-octanoyl-L-lysyl-[protein] + holo-[ACP] + H(+). The protein operates within protein modification; protein lipoylation via endogenous pathway; protein N(6)-(lipoyl)lysine from octanoyl-[acyl-carrier-protein]: step 1/2. Its function is as follows. Catalyzes the transfer of endogenously produced octanoic acid from octanoyl-acyl-carrier-protein onto the lipoyl domains of lipoate-dependent enzymes. Lipoyl-ACP can also act as a substrate although octanoyl-ACP is likely to be the physiological substrate. The chain is Octanoyltransferase from Neisseria meningitidis serogroup B (strain ATCC BAA-335 / MC58).